Here is a 320-residue protein sequence, read N- to C-terminus: o-succinylbenzoate synthase (320 aa).

The active-site Proton donor is the Lys-133. Mg(2+)-binding residues include Asp-161, Glu-190, and Asp-213. Lys-235 serves as the catalytic Proton acceptor.

This sequence belongs to the mandelate racemase/muconate lactonizing enzyme family. MenC type 1 subfamily. Requires a divalent metal cation as cofactor.

The enzyme catalyses (1R,6R)-6-hydroxy-2-succinyl-cyclohexa-2,4-diene-1-carboxylate = 2-succinylbenzoate + H2O. Its pathway is quinol/quinone metabolism; 1,4-dihydroxy-2-naphthoate biosynthesis; 1,4-dihydroxy-2-naphthoate from chorismate: step 4/7. It participates in quinol/quinone metabolism; menaquinone biosynthesis. Functionally, converts 2-succinyl-6-hydroxy-2,4-cyclohexadiene-1-carboxylate (SHCHC) to 2-succinylbenzoate (OSB). The polypeptide is o-succinylbenzoate synthase (Salmonella arizonae (strain ATCC BAA-731 / CDC346-86 / RSK2980)).